Here is a 92-residue protein sequence, read N- to C-terminus: Small ribosomal subunit protein uS19 (92 aa).

The protein belongs to the universal ribosomal protein uS19 family.

Functionally, protein S19 forms a complex with S13 that binds strongly to the 16S ribosomal RNA. The sequence is that of Small ribosomal subunit protein uS19 from Cyanothece sp. (strain PCC 7425 / ATCC 29141).